The following is a 264-amino-acid chain: Apolipoprotein A-I (264 aa).

Residues 1-18 (MRVVVVTLALLFLTGTQA) form the signal peptide. Tandem repeats lie at residues 67–88 (LKLA…EDMA) and 89–110 (PYYK…AELT). The 10 X approximate tandem repeats stretch occupies residues 67–264 (LKLADNLDTL…LLDELQKTVA (198 aa)). A 3; half-length repeat occupies 111-121 (KDLEEVKEKIR). 5 consecutive repeat copies span residues 122-143 (PFLD…QRLA), 144-165 (PVAE…QKLT), 166-187 (PVAE…KNLA), 188-209 (PYSD…EKGI), and 210-231 (PQAA…EKMT). The 9; half-length repeat unit spans residues 232–242 (PLVQDFKERLT). The stretch at 243-264 (PYAENLKTRFISLLDELQKTVA) is repeat 10.

This sequence belongs to the apolipoprotein A1/A4/E family. In terms of tissue distribution, major protein of plasma HDL, also found in chylomicrons.

The protein localises to the secreted. Participates in the reverse transport of cholesterol from tissues to the liver for excretion by promoting cholesterol efflux from tissues and by acting as a cofactor for the lecithin cholesterol acyltransferase (LCAT). This chain is Apolipoprotein A-I (APOA1), found in Anas platyrhynchos (Mallard).